Here is a 118-residue protein sequence, read N- to C-terminus: ATP synthase subunit c (118 aa).

The next 2 helical transmembrane spans lie at 34–54 (AIFAVGAMIGAGIAIGVGAVG) and 88–108 (MAMAESIAIYALVVSLVLIFA).

This sequence belongs to the ATPase C chain family. As to quaternary structure, F-type ATPases have 2 components, F(1) - the catalytic core - and F(0) - the membrane proton channel. F(1) has five subunits: alpha(3), beta(3), gamma(1), delta(1), epsilon(1). F(0) has three main subunits: a(1), b(2) and c(10-14). The alpha and beta chains form an alternating ring which encloses part of the gamma chain. F(1) is attached to F(0) by a central stalk formed by the gamma and epsilon chains, while a peripheral stalk is formed by the delta and b chains.

The protein localises to the cell inner membrane. F(1)F(0) ATP synthase produces ATP from ADP in the presence of a proton or sodium gradient. F-type ATPases consist of two structural domains, F(1) containing the extramembraneous catalytic core and F(0) containing the membrane proton channel, linked together by a central stalk and a peripheral stalk. During catalysis, ATP synthesis in the catalytic domain of F(1) is coupled via a rotary mechanism of the central stalk subunits to proton translocation. Functionally, key component of the F(0) channel; it plays a direct role in translocation across the membrane. A homomeric c-ring of between 10-14 subunits forms the central stalk rotor element with the F(1) delta and epsilon subunits. The chain is ATP synthase subunit c from Syntrophus aciditrophicus (strain SB).